The primary structure comprises 488 residues: Ribulose bisphosphate carboxylase large chain (488 aa).

Substrate-binding residues include asparagine 127 and threonine 177. The Proton acceptor role is filled by lysine 179. Residue lysine 181 participates in substrate binding. Residues lysine 205, aspartate 207, and glutamate 208 each coordinate Mg(2+). The residue at position 205 (lysine 205) is an N6-carboxylysine. Histidine 297 (proton acceptor) is an active-site residue. Substrate-binding residues include arginine 298, histidine 330, and serine 382.

It belongs to the RuBisCO large chain family. Type I subfamily. In terms of assembly, heterohexadecamer of 8 large chains and 8 small chains. Requires Mg(2+) as cofactor.

It localises to the plastid. The protein localises to the chloroplast. It catalyses the reaction 2 (2R)-3-phosphoglycerate + 2 H(+) = D-ribulose 1,5-bisphosphate + CO2 + H2O. The enzyme catalyses D-ribulose 1,5-bisphosphate + O2 = 2-phosphoglycolate + (2R)-3-phosphoglycerate + 2 H(+). RuBisCO catalyzes two reactions: the carboxylation of D-ribulose 1,5-bisphosphate, the primary event in carbon dioxide fixation, as well as the oxidative fragmentation of the pentose substrate in the photorespiration process. Both reactions occur simultaneously and in competition at the same active site. This is Ribulose bisphosphate carboxylase large chain from Ectocarpus siliculosus (Brown alga).